Here is a 463-residue protein sequence, read N- to C-terminus: Elongation factor 1-alpha (463 aa).

A N,N,N-trimethylglycine modification is found at G2. K3 carries the post-translational modification N6,N6-dimethyllysine; alternate. K3 carries the N6-methyllysine; alternate modification. The tr-type G domain occupies 5 to 239; that stretch reads KNHVNVVVIG…DAIEPPSRPT (235 aa). The G1 stretch occupies residues 14–21; sequence GHVDSGKS. Residue 14 to 21 participates in GTP binding; that stretch reads GHVDSGKS. K30 carries the post-translational modification N6-methyllysine. Residues 70-74 form a G2 region; it reads GITID. K79 is subject to N6,N6,N6-trimethyllysine. The segment at 91–94 is G3; that stretch reads DAPG. GTP contacts are provided by residues 91–95 and 153–156; these read DAPGH and NKMD. The interval 153 to 156 is G4; sequence NKMD. The tract at residues 191-193 is G5; that stretch reads SGW. K315 carries the N6,N6-dimethyllysine; alternate modification. K315 is subject to N6-methyllysine; alternate. K389 bears the N6-methyllysine mark.

It belongs to the TRAFAC class translation factor GTPase superfamily. Classic translation factor GTPase family. EF-Tu/EF-1A subfamily.

Its subcellular location is the cytoplasm. In terms of biological role, this protein promotes the GTP-dependent binding of aminoacyl-tRNA to the A-site of ribosomes during protein biosynthesis. The chain is Elongation factor 1-alpha (TEF) from Puccinia graminis (Black stem rust fungus).